Here is a 337-residue protein sequence, read N- to C-terminus: Ornithine carbamoyltransferase (337 aa).

Carbamoyl phosphate-binding positions include 57-60, Gln84, Arg108, and 135-138; these read STRT and HPTQ. L-ornithine is bound by residues Asn167, Asp231, and 235–236; that span reads SM. Carbamoyl phosphate contacts are provided by residues 272–273 and Arg317; that span reads CL.

The protein belongs to the aspartate/ornithine carbamoyltransferase superfamily. OTCase family.

Its subcellular location is the cytoplasm. It catalyses the reaction carbamoyl phosphate + L-ornithine = L-citrulline + phosphate + H(+). The protein operates within amino-acid degradation; L-arginine degradation via ADI pathway; carbamoyl phosphate from L-arginine: step 2/2. Functionally, reversibly catalyzes the transfer of the carbamoyl group from carbamoyl phosphate (CP) to the N(epsilon) atom of ornithine (ORN) to produce L-citrulline. This is Ornithine carbamoyltransferase from Streptococcus uberis (strain ATCC BAA-854 / 0140J).